A 331-amino-acid chain; its full sequence is Fructose-1,6-bisphosphatase class 1 (331 aa).

Mg(2+) contacts are provided by Glu-88, Asp-108, Leu-110, and Asp-111. Residues 111 to 114 and Asn-201 each bind substrate; that span reads DGSS. Glu-273 is a binding site for Mg(2+).

It belongs to the FBPase class 1 family. In terms of assembly, homotetramer. Mg(2+) serves as cofactor.

Its subcellular location is the cytoplasm. The catalysed reaction is beta-D-fructose 1,6-bisphosphate + H2O = beta-D-fructose 6-phosphate + phosphate. Its pathway is carbohydrate biosynthesis; gluconeogenesis. In Methylobacillus flagellatus (strain ATCC 51484 / DSM 6875 / VKM B-1610 / KT), this protein is Fructose-1,6-bisphosphatase class 1.